The primary structure comprises 431 residues: Evolutionarily conserved signaling intermediate in Toll pathway, mitochondrial (431 aa).

A mitochondrion-targeting transit peptide spans 1–48 (MSWVQATLLARGLCRAWGGTCGAALTGTSISQVPRRLPRGLHCSAAAH). Residue K372 forms a Glycyl lysine isopeptide (Lys-Gly) (interchain with G-Cter in ubiquitin) linkage. Residues 400–431 (LQTSSAGLEEPPLPEDHQEEDDNLQRQQQGQS) form a disordered region.

Belongs to the ECSIT family. As to quaternary structure, interacts with MAP3K1, SMAD4 and TRAF6. Interacts with SMAD1 only after BMP4-treatment. Part of the mitochondrial complex I assembly/MCIA complex that comprises at least the core subunits TMEM126B, NDUFAF1, ECSIT and ACAD9 and complement subunits such as COA1 and TMEM186. Interacts with NDUFAF1. Interacts with ACAD9. Interacts with TRIM59. Interacts with TMEM70 and TMEM242. Interacts (when ubiquitinated) with NF-kappa-B subunits RELA and NFKB1. Interacts with RIGI, IFIT1 and MAVS; these interactions promote RLR-mediated type I IFN induction. Interacts with SQSTM1; this interaction inhibits TLR4 signaling via functional regulation of the TRAF6-ECSIT complex. Interacts with cereblon/CRBN; this interaction inhibits the ubiquitination of ECSIT. In terms of processing, ubiquitinated on Lys-372; leading to translocation in the nucleus together with RELA and NFKB1 and expression of NF-kappa-B-dependent genes.

It localises to the cytoplasm. Its subcellular location is the nucleus. The protein resides in the mitochondrion. In terms of biological role, adapter protein that plays a role in different signaling pathways including TLRs and IL-1 pathways or innate antiviral induction signaling. Plays a role in the activation of NF-kappa-B by forming a signal complex with TRAF6 and TAK1/MAP3K7 to activate TAK1/MAP3K7 leading to activation of IKKs. Once ubiquitinated, interacts with the dissociated RELA and NFKB1 proteins and translocates to the nucleus where it induces NF-kappa-B-dependent gene expression. Plays a role in innate antiviral immune response by bridging the pattern recognition receptors RIGI and MDA5/IFIT1 to the MAVS complex at the mitochondrion. Promotes proteolytic activation of MAP3K1. Involved in the BMP signaling pathway. Required for normal embryonic development. Functionally, as part of the MCIA complex, involved in the assembly of the mitochondrial complex I. The chain is Evolutionarily conserved signaling intermediate in Toll pathway, mitochondrial from Homo sapiens (Human).